The sequence spans 193 residues: Ribosomal RNA small subunit methyltransferase G (193 aa).

Residues Gly62, Phe67, 111–112 (IE), and Arg125 each bind S-adenosyl-L-methionine.

It belongs to the methyltransferase superfamily. RNA methyltransferase RsmG family.

The protein localises to the cytoplasm. The enzyme catalyses guanosine(527) in 16S rRNA + S-adenosyl-L-methionine = N(7)-methylguanosine(527) in 16S rRNA + S-adenosyl-L-homocysteine. Its function is as follows. Specifically methylates the N7 position of guanine in position 527 of 16S rRNA. The protein is Ribosomal RNA small subunit methyltransferase G of Gluconobacter oxydans (strain 621H) (Gluconobacter suboxydans).